We begin with the raw amino-acid sequence, 1482 residues long: Calcium-dependent protein kinase 6 (1482 aa).

Disordered regions lie at residues 250-320 (TNNY…IRPN) and 739-760 (SENFSNNFNDNKQKSLKNDDSN). Residues 254–264 (AHDNNQDSNSY) are compositionally biased toward polar residues. Over residues 277 to 301 (EEDNDTGDTYADNEEDEDNRDDNDD) the composition is skewed to acidic residues. A compositionally biased stretch (polar residues) spans 302–318 (YSQYNQCEVESDTNQIR). Low complexity predominate over residues 739 to 748 (SENFSNNFND). Over residues 749-760 (NKQKSLKNDDSN) the composition is skewed to basic and acidic residues. 2 consecutive EF-hand domains span residues 931 to 966 (IFERSARATFKQFDVKNKNFLHFSEIESLIQKLCYN) and 972 to 1007 (VDKKILSIVYKDYDSSKNNCMNYMDFRQMYWDLLKQ). Residues Asp-985, Ser-987, Asn-989, Cys-991, and Asp-996 each contribute to the Ca(2+) site. Residues 1043-1295 (LSFKKILGCG…AAVLLHHPWF (253 aa)) enclose the Protein kinase domain. ATP contacts are provided by residues 1049-1057 (LGCGAFGEV) and Lys-1072. Asp-1162 (proton acceptor) is an active-site residue. EF-hand domains lie at 1338 to 1373 (NHVKYINDIFLKIDSNHNGSLSHREIYNVLSNAGVK), 1376 to 1406 (DINRIIQALDVNDKGCITYTEFIAGCYRWKN), 1407 to 1442 (IDSTFLKAAFNKIDKDEDGYISKSDLATLVHDNGVN), and 1468 to 1482 (KISFEDFKDYMLSTF). Ca(2+)-binding residues include Asp-1351, Asn-1353, Asn-1355, Ser-1357, and Glu-1362. Ca(2+) is bound by residues Asp-1420, Asp-1422, Asp-1424, Tyr-1426, and Asp-1431.

This sequence belongs to the protein kinase superfamily. Ser/Thr protein kinase family. CDPK subfamily. It depends on Mg(2+) as a cofactor.

The enzyme catalyses L-seryl-[protein] + ATP = O-phospho-L-seryl-[protein] + ADP + H(+). It catalyses the reaction L-threonyl-[protein] + ATP = O-phospho-L-threonyl-[protein] + ADP + H(+). With respect to regulation, activated by calcium. Its function is as follows. Calcium-dependent protein kinase which acts as a sensor and effector of intracellular Ca(2+) levels. In sporozoites, probably involved in the secretion of the cysteine protease that cleaves circumsporozoite protein CSP, thereby exposing CSP TSR domain, which binds with high affinity to highly sulfated heparan sulfate proteoglycans (HSPGs), resulting in productive invasion of the host hepatocytes. The protein is Calcium-dependent protein kinase 6 of Plasmodium berghei (strain Anka).